A 463-amino-acid polypeptide reads, in one-letter code: Serine/threonine-protein kinase tricornered (463 aa).

In terms of domain architecture, Protein kinase spans 93–394 (FEALKVIGRG…LEDLKSVPFF (302 aa)). ATP contacts are provided by residues 99 to 107 (IGRGAFGEV) and Lys122. An interaction with mats and Mob1 region spans residues 119 to 180 (YAMKVLRKAD…EFLPGGDMMT (62 aa)). Asp216 (proton acceptor) is an active-site residue. Ser292 carries the post-translational modification Phosphoserine. Residues 395–463 (RGVDWEHIRE…YKRFEVRNLE (69 aa)) form the AGC-kinase C-terminal domain. Position 453 is a phosphothreonine (Thr453).

It belongs to the protein kinase superfamily. AGC Ser/Thr protein kinase family. As to quaternary structure, interacts with, and is activated by, Mob1. Mg(2+) serves as cofactor. As to expression, expressed in the peripheral and central nervous system (at protein level). Expressed in the wing imaginal disk.

It is found in the cytoplasm. It localises to the nucleus. The enzyme catalyses L-seryl-[protein] + ATP = O-phospho-L-seryl-[protein] + ADP + H(+). It carries out the reaction L-threonyl-[protein] + ATP = O-phospho-L-threonyl-[protein] + ADP + H(+). With respect to regulation, activated by fry. Its function is as follows. Serine/threonine-protein kinase involved in controlling cell structure and proliferation of a variety of polarized outgrowths including epidermal hairs, bristles, arista laterals, and dendrites. Together with fry, maintains the integrity of epidermal hairs and is an essential component of the signaling pathway regulating dendritic branching of sensory neurons. Reduces neurite outgrowth by phosphorylating pav, thereby inhibiting its function in microtubule-microtubule sliding. This Drosophila melanogaster (Fruit fly) protein is Serine/threonine-protein kinase tricornered.